Consider the following 349-residue polypeptide: MTSPEDTAGVEAALAAEGFSPTDVRAVMCMTESDGFGRGYASLAFAHAFAPALGCPPEDVAQQIPMIMIGGCSGLVTPYAAVFVDDPASSWVTDGSGGGLSIGVTTTATLNPLDVGTPAMVDAVADAVRSAMAAAGIDKVADVHNVQIKTPWPSSAALLDGPLSGLDAGSVGAMARAAGALGVAVALGEVSRADITADVFLRDPNLRSDVASVSAGTERVDAAVLVMGNSPTSASPYRIGHGVLRDGIDPHGVLDALRAVGIDSGWPFTADTTPVEHVFLKSAVDGTDECRGRRHVLRTDYLGPYSWLLGKAVVHATVASIVGDPMMQVSGGGEHQGPPGGGTVAVIAR.

Residues 1-90 are RU A; that stretch reads MTSPEDTAGV…AVFVDDPASS (90 aa). R38 contributes to the substrate binding site. Residues 99–231 are RU B; sequence GLSIGVTTTA…AAVLVMGNSP (133 aa). Residue K149 is part of the active site. Substrate is bound by residues R176, 214–215, K311, and 330–331; these read SA and SG. S214 (nucleophile) is an active-site residue. The segment at 237–349 is RU C; that stretch reads YRIGHGVLRD…GGGTVAVIAR (113 aa).

Belongs to the cyclic amide hydrolase (CyAH) family. Homotetramer.

Cyclic amide hydrolase of unknown substrate specificity. Catalyzes the hydrolytic ring-opening of a cyclic amide. Does not act on cyanuric acid nor barbituric acid. The polypeptide is Cyclic amide hydrolase (Rhodococcus sp).